The chain runs to 771 residues: Transducin-like enhancer protein 3-B (771 aa).

The interval 1 to 141 (MYPQGRHPAP…PLTQQQLQAQ (141 aa)) is q domain. Over residues 137-148 (QLQAQHLSHAAH) the composition is skewed to low complexity. Disordered regions lie at residues 137–174 (QLQA…GSGS) and 196–360 (HHDL…MEAL). Residues 142-209 (HLSHAAHGPP…EHRERESSTN (68 aa)) form a GP domain region. Positions 196 to 206 (HHDLEHRERES) are enriched in basic and acidic residues. Positions 207–217 (STNNSVSPSDS) are enriched in low complexity. Residues 210–278 (NSVSPSDSLR…TPRVSPSHSP (69 aa)) are ccN domain. Composition is skewed to basic and acidic residues over residues 219-257 (RASE…KSDD) and 282-293 (GLDKARALKKDA). Residues 235–238 (KKRR) carry the Nuclear localization signal motif. The interval 279–451 (PENGLDKARA…GGKPAYSFHV (173 aa)) is SP domain. Residues 294–309 (PNSPASVASSGSTPSS) are compositionally biased toward low complexity. Residues Ser296 and Ser299 each carry the phosphoserine modification. Over residues 310–319 (KAKDHPHNDK) the composition is skewed to basic and acidic residues. Positions 320–332 (SSTPGLKSNTPTP) are enriched in polar residues. WD repeat units follow at residues 483–521 (SHGE…SKSP), 529–568 (NRDN…PRIK), 573–612 (SSAP…LVRQ), 615–654 (GHTD…QLQQ), 656–695 (DFTS…KYQL), 697–736 (LHES…SIFQ), and 738–771 (KESS…EVIY).

Belongs to the WD repeat Groucho/TLE family. At gastrulation, expression is absent within the axial mesoderm. After gastrulation is complete, expressed in the presomitic mesoderm, but expression in the tailbud doesn't begin until the six to seven somite stage, after which it becomes abundant. Expression is abundant throughout somitogenesis within the posterior half of the somites, but is absent from older somites. Also expressed in a dynamic manner within the neural plate.

The protein resides in the nucleus. Transcriptional corepressor that binds to a number of transcription factors. Inhibits the transcriptional activation mediated by CTNNB1 and TCF family members in Wnt signaling. The effects of full-length TLE family members may be modulated by association with dominant-negative AES. This chain is Transducin-like enhancer protein 3-B, found in Danio rerio (Zebrafish).